The primary structure comprises 95 residues: Lipolysis-activating peptide 1-beta chain (95 aa).

An N-terminal signal peptide occupies residues Met1–Gly22. Residues Gly23–Pro91 enclose the LCN-type CS-alpha/beta domain. Disulfide bonds link Cys37–Cys60, Cys45–Cys70, and Cys49–Cys72.

Homodimer; disulfide-linked or monomer (edited version) or heterodimer of an alpha chain (AC P84810) and this beta chain (non-edited version). Expressed by the venom gland.

It localises to the secreted. In terms of biological role, the homodimer inhibits HMG-CoA reductase (HMGCR) (32% of inhibition produced by 0.6 uM), a glycoprotein involved in the control of cholesterol biosynthesis. The inhibitory effects of bumarsin are seen at much lower concentrations (0.6 uM) than that for statins such as atorvastatin (5 mM) and simvastatin (10 uM). In addition to inhibition of HMG-CoA reductase, this protein lowers cholesterol levels by inducing steroid hormone synthesis via StAR, and by increasing reverse cholesterol transport mediated by the induction of ABCA1 and APOA1. The heterodimer non-edited LVP1 induces lipolysis in rat adipocytes. Induction of lipolysis by LVP1 appears to be mediated through the beta-2 adrenergic receptor pathway (ADRB2). Intracerebroventricular injection is not toxic to mice. Its function is as follows. The monomer edited version, similar to alpha-toxins, may modulate voltage-gated sodium channels (Nav) and may block voltage-gated potassium channels (Kv). This chain is Lipolysis-activating peptide 1-beta chain, found in Buthus occitanus tunetanus (Common European scorpion).